A 544-amino-acid polypeptide reads, in one-letter code: Methyl-accepting chemotaxis protein McpP (544 aa).

The next 3 membrane-spanning stretches (helical) occupy residues 12-32, 50-70, and 192-212; these read RLWLILVVAVAMLVVLGLLML, VVQTAAGVLAYYQGLEAAGTL, and DASLVGVGIALLMALVVMLIA. The HAMP domain occupies 213–267; the sequence is RSIARPLQEAVQAMGNIASGESDLTRRLDTHGSDEITHLGEHFNRFNGKLQGVVG. A Methyl-accepting transducer domain is found at 272-508; the sequence is AAHALAQSAG…EINRNVLDTA (237 aa).

This sequence belongs to the methyl-accepting chemotaxis (MCP) protein family.

Its subcellular location is the cell membrane. Chemotactic-signal transducers respond to changes in the concentration of attractants and repellents in the environment, transduce a signal from the outside to the inside of the cell, and facilitate sensory adaptation through the variation of the level of methylation. McpP is a chemoreceptor that responds specifically to some C2 and C3 carboxylic acids. Recognizes acetate, pyruvate, propionate, and L-lactate. The sequence is that of Methyl-accepting chemotaxis protein McpP from Pseudomonas putida (strain ATCC 47054 / DSM 6125 / CFBP 8728 / NCIMB 11950 / KT2440).